A 366-amino-acid polypeptide reads, in one-letter code: MSGNTLGTLFCVTNFGESHGPAIGCVIDGCPPGMELSEADIQADLDRRRPGTSRHVTQRNEPDAVEILSGVYEGKTTGTPIALLIRNTDQRSKDYGNIAQSFRPGHADYAYWHKYGLRDPRGGGRSSARLTAPTVAAGAVAKKWLAEKYGTRFRACMTQLGELPIPFENWEHVPHNPFFAPVADVQAYEDYMDALRKSGDSCGARIRVQATSVPVGLGEPLYDKLDADIAHVMMGLNAVKGVEIGAGFASVAQRGTTHGDSLTPTGFASNNAGGVLGGISTGQDIEVSLAIKPTSSIISPRESIDIHGQSTEVITKGRHDPCVGIRAAPIAEALLALVIMDHALRHRAQCGDVVQAVAPIPAVRLG.

NADP(+)-binding residues include R48 and R54. Residues R125–S127, N237–A238, G277, K292–S296, and R318 contribute to the FMN site.

This sequence belongs to the chorismate synthase family. In terms of assembly, homotetramer. It depends on FMNH2 as a cofactor.

It catalyses the reaction 5-O-(1-carboxyvinyl)-3-phosphoshikimate = chorismate + phosphate. The protein operates within metabolic intermediate biosynthesis; chorismate biosynthesis; chorismate from D-erythrose 4-phosphate and phosphoenolpyruvate: step 7/7. Functionally, catalyzes the anti-1,4-elimination of the C-3 phosphate and the C-6 proR hydrogen from 5-enolpyruvylshikimate-3-phosphate (EPSP) to yield chorismate, which is the branch point compound that serves as the starting substrate for the three terminal pathways of aromatic amino acid biosynthesis. This reaction introduces a second double bond into the aromatic ring system. This is Chorismate synthase from Acidovorax ebreus (strain TPSY) (Diaphorobacter sp. (strain TPSY)).